The following is a 609-amino-acid chain: Protein tesmin/TSO1-like CXC 3 (609 aa).

Over residues 69-84 (ESRFRSQKDVSASKEV) the composition is skewed to basic and acidic residues. Disordered stretches follow at residues 69 to 102 (ESRF…YKND), 307 to 328 (PISP…SSCK), 457 to 477 (LFEQ…KTQQ), and 569 to 609 (NSKR…TPHH). The CRC domain occupies 326-451 (SCKRCNCKKS…RCEGCKNAFG (126 aa)). The span at 466–477 (TSGTPGTKKTQQ) shows a compositional bias: polar residues.

The protein belongs to the lin-54 family. As to expression, ubiquitous but expressed mostly in flowers and at significant levels in leaves. Detected with highest levels in developing ovules and microspores, and in petals.

The protein resides in the nucleus. Its function is as follows. Plays a role in development of both male and female reproductive tissues. This Arabidopsis thaliana (Mouse-ear cress) protein is Protein tesmin/TSO1-like CXC 3 (TCX3).